The primary structure comprises 559 residues: U-box domain-containing protein 41 (559 aa).

Disordered regions lie at residues 1–30 (MGGNKQRWFSFHQRSSSATTTTLPQHKHDE) and 121–156 (RMDKDPNPSPGQSPGPGDKDPEPEILPPVEENSPSD). Positions 12-24 (HQRSSSATTTTLP) are enriched in polar residues. The U-box domain occupies 30–104 (ETPPEFLCPI…FSWCDRQKVD (75 aa)). ARM repeat units follow at residues 266-305 (EDLRVSLCTDRILSFLRSLLVSRYNLVQTNAAASVVNLSL), 307-346 (KQNKVKIVRSGFVPLLIDVLKSGTTEAQEHVAGALFSLAL), 348-388 (DENK…HLSL), 390-427 (PSNRTRLVRAGAVPTLLSMVRSGDSTSRILLVLCNLAA), and 428-472 (CPDG…TLCQ).

It carries out the reaction S-ubiquitinyl-[E2 ubiquitin-conjugating enzyme]-L-cysteine + [acceptor protein]-L-lysine = [E2 ubiquitin-conjugating enzyme]-L-cysteine + N(6)-ubiquitinyl-[acceptor protein]-L-lysine.. It functions in the pathway protein modification; protein ubiquitination. Its function is as follows. Functions as an E3 ubiquitin ligase. This is U-box domain-containing protein 41 (PUB41) from Arabidopsis thaliana (Mouse-ear cress).